We begin with the raw amino-acid sequence, 392 residues long: Enoyl-[acyl-carrier-protein] reductase [NADH] (392 aa).

Residues 48–53 (GCSTGY), 74–75 (FE), 111–112 (DA), and 139–140 (LA) contribute to the NAD(+) site. Residue tyrosine 225 participates in substrate binding. Tyrosine 235 serves as the catalytic Proton donor. NAD(+) is bound by residues lysine 244 and 273–275 (LVT).

It belongs to the TER reductase family. As to quaternary structure, monomer.

It catalyses the reaction a 2,3-saturated acyl-[ACP] + NAD(+) = a (2E)-enoyl-[ACP] + NADH + H(+). It participates in lipid metabolism; fatty acid biosynthesis. Involved in the final reduction of the elongation cycle of fatty acid synthesis (FAS II). Catalyzes the reduction of a carbon-carbon double bond in an enoyl moiety that is covalently linked to an acyl carrier protein (ACP). This chain is Enoyl-[acyl-carrier-protein] reductase [NADH], found in Idiomarina loihiensis (strain ATCC BAA-735 / DSM 15497 / L2-TR).